A 397-amino-acid polypeptide reads, in one-letter code: Phosphoglycerate kinase (397 aa).

Substrate contacts are provided by residues 21 to 23, arginine 36, 59 to 62, arginine 119, and arginine 156; these read DFN and HLGR. ATP is bound by residues lysine 207, glycine 295, glutamate 326, and 353-356; that span reads GGDS.

It belongs to the phosphoglycerate kinase family. As to quaternary structure, monomer.

It is found in the cytoplasm. The enzyme catalyses (2R)-3-phosphoglycerate + ATP = (2R)-3-phospho-glyceroyl phosphate + ADP. It functions in the pathway carbohydrate degradation; glycolysis; pyruvate from D-glyceraldehyde 3-phosphate: step 2/5. The protein is Phosphoglycerate kinase of Enterococcus faecalis (strain ATCC 700802 / V583).